A 229-amino-acid polypeptide reads, in one-letter code: 2-C-methyl-D-erythritol 4-phosphate cytidylyltransferase (229 aa).

Belongs to the IspD/TarI cytidylyltransferase family. IspD subfamily.

The catalysed reaction is 2-C-methyl-D-erythritol 4-phosphate + CTP + H(+) = 4-CDP-2-C-methyl-D-erythritol + diphosphate. The protein operates within isoprenoid biosynthesis; isopentenyl diphosphate biosynthesis via DXP pathway; isopentenyl diphosphate from 1-deoxy-D-xylulose 5-phosphate: step 2/6. Its function is as follows. Catalyzes the formation of 4-diphosphocytidyl-2-C-methyl-D-erythritol from CTP and 2-C-methyl-D-erythritol 4-phosphate (MEP). The polypeptide is 2-C-methyl-D-erythritol 4-phosphate cytidylyltransferase (Clostridium acetobutylicum (strain ATCC 824 / DSM 792 / JCM 1419 / IAM 19013 / LMG 5710 / NBRC 13948 / NRRL B-527 / VKM B-1787 / 2291 / W)).